The chain runs to 554 residues: CTP synthase (554 aa).

An amidoligase domain region spans residues 1 to 265 (MTPLIFVTGG…DEIVIDQFKL (265 aa)). S13 lines the CTP pocket. S13 is a UTP binding site. ATP contacts are provided by residues 14-19 (SLGKGI) and D71. The Mg(2+) site is built by D71 and E139. CTP is bound by residues 146 to 148 (DIE), 186 to 191 (KTKPTQ), and K222. Residues 186–191 (KTKPTQ) and K222 each bind UTP. The 254-residue stretch at 292–545 (TIAVVGKYVD…VKASRARKAG (254 aa)) folds into the Glutamine amidotransferase type-1 domain. Position 353 (G353) interacts with L-glutamine. The active-site Nucleophile; for glutamine hydrolysis is C380. Residues 381–384 (YGMQ), E404, and R471 each bind L-glutamine. Catalysis depends on residues H518 and E520.

Belongs to the CTP synthase family. As to quaternary structure, homotetramer.

The catalysed reaction is UTP + L-glutamine + ATP + H2O = CTP + L-glutamate + ADP + phosphate + 2 H(+). It catalyses the reaction L-glutamine + H2O = L-glutamate + NH4(+). The enzyme catalyses UTP + NH4(+) + ATP = CTP + ADP + phosphate + 2 H(+). It participates in pyrimidine metabolism; CTP biosynthesis via de novo pathway; CTP from UDP: step 2/2. With respect to regulation, allosterically activated by GTP, when glutamine is the substrate; GTP has no effect on the reaction when ammonia is the substrate. The allosteric effector GTP functions by stabilizing the protein conformation that binds the tetrahedral intermediate(s) formed during glutamine hydrolysis. Inhibited by the product CTP, via allosteric rather than competitive inhibition. In terms of biological role, catalyzes the ATP-dependent amination of UTP to CTP with either L-glutamine or ammonia as the source of nitrogen. Regulates intracellular CTP levels through interactions with the four ribonucleotide triphosphates. The sequence is that of CTP synthase from Xylella fastidiosa (strain M12).